A 632-amino-acid polypeptide reads, in one-letter code: tRNA uridine 5-carboxymethylaminomethyl modification enzyme MnmG (632 aa).

13-18 serves as a coordination point for FAD; it reads GGGHAG. 273–287 contributes to the NAD(+) binding site; that stretch reads GPRYCPSIEDKIHRF.

It belongs to the MnmG family. As to quaternary structure, homodimer. Heterotetramer of two MnmE and two MnmG subunits. The cofactor is FAD.

It is found in the cytoplasm. In terms of biological role, NAD-binding protein involved in the addition of a carboxymethylaminomethyl (cmnm) group at the wobble position (U34) of certain tRNAs, forming tRNA-cmnm(5)s(2)U34. The protein is tRNA uridine 5-carboxymethylaminomethyl modification enzyme MnmG of Psychrobacter cryohalolentis (strain ATCC BAA-1226 / DSM 17306 / VKM B-2378 / K5).